A 318-amino-acid polypeptide reads, in one-letter code: Small ribosomal subunit protein RACK1 (318 aa).

7 WD repeats span residues 11–44 (GHRG…LSWG), 65–95 (GHSA…RLWN), 107–137 (GHTK…RVWN), 150–182 (AHTD…KVWD), 194–224 (GHTN…RLWD), 235–264 (AAGA…RIFD), and 282–315 (KKIV…WGVS).

This sequence belongs to the WD repeat G protein beta family. Ribosomal protein RACK1 subfamily.

The chain is Small ribosomal subunit protein RACK1 from Trypanosoma brucei brucei.